The primary structure comprises 159 residues: 2-C-methyl-D-erythritol 2,4-cyclodiphosphate synthase (159 aa).

Residues Asp10 and His12 each contribute to the a divalent metal cation site. Residues Asp10–His12 and His36–Ser37 each bind 4-CDP-2-C-methyl-D-erythritol 2-phosphate. An a divalent metal cation-binding site is contributed by His44. 4-CDP-2-C-methyl-D-erythritol 2-phosphate is bound by residues Asp58–Gly60, Phe63–Asp67, Ala102–Ala108, Thr134–Glu137, Phe141, and Arg144.

Belongs to the IspF family. In terms of assembly, homotrimer. It depends on a divalent metal cation as a cofactor.

It carries out the reaction 4-CDP-2-C-methyl-D-erythritol 2-phosphate = 2-C-methyl-D-erythritol 2,4-cyclic diphosphate + CMP. It participates in isoprenoid biosynthesis; isopentenyl diphosphate biosynthesis via DXP pathway; isopentenyl diphosphate from 1-deoxy-D-xylulose 5-phosphate: step 4/6. Functionally, involved in the biosynthesis of isopentenyl diphosphate (IPP) and dimethylallyl diphosphate (DMAPP), two major building blocks of isoprenoid compounds. Catalyzes the conversion of 4-diphosphocytidyl-2-C-methyl-D-erythritol 2-phosphate (CDP-ME2P) to 2-C-methyl-D-erythritol 2,4-cyclodiphosphate (ME-CPP) with a corresponding release of cytidine 5-monophosphate (CMP). The polypeptide is 2-C-methyl-D-erythritol 2,4-cyclodiphosphate synthase (Shewanella piezotolerans (strain WP3 / JCM 13877)).